A 285-amino-acid polypeptide reads, in one-letter code: Single myb histone 3 (285 aa).

The tract at residues 1–35 is disordered; that stretch reads MGAPKQKWTSEEEDALRRGVRKHGAGKWRTIQKDP. The 60-residue stretch at 1-60 folds into the HTH myb-type domain; the sequence is MGAPKQKWTSEEEDALRRGVRKHGAGKWRTIQKDPQFSPILSSRSNIDLKDKWRNLSFSA. A DNA-binding region (H-T-H motif) is located at residues 28–56; that stretch reads WRTIQKDPQFSPILSSRSNIDLKDKWRNL. Residues 113–181 form the H15 domain; it reads TPPKYGAMIM…KVDNFYRLPD (69 aa). Positions 226-255 form a coiled coil; the sequence is VKVTDAEAKAHDAHDQMMEAERMLKMAEDT.

Belongs to the histone H1/H5 family. SMH subfamily. Forms a homodimer and heterodimers.

It localises to the nucleus. It is found in the chromosome. The protein localises to the nucleolus. The protein resides in the telomere. Binds preferentially double-stranded telomeric repeats, but may also bind to the single telomeric strand. The protein is Single myb histone 3 (SMH3) of Zea mays (Maize).